The chain runs to 59 residues: Three-finger toxin MS1 (59 aa).

4 disulfide bridges follow: Cys-3–Cys-22, Cys-17–Cys-39, Cys-41–Cys-52, and Cys-53–Cys-58.

The protein belongs to the three-finger toxin family. Short-chain subfamily. Type I alpha-neurotoxin sub-subfamily. In terms of tissue distribution, expressed by the venom gland.

It localises to the secreted. Functionally, produces peripheral paralysis by blocking neuromuscular transmission at the postsynaptic site. Binds to and inhibits the endogenous nicotinic acetylcholine receptors (nAChR) in human rhabdomyosarcoma TE 671 cell line with an IC(50) of 48.2 mM. This neurotoxin is lethal to mice by intraperitoneal injection and to zebrafish by injection at the back of the dorsolateral region. This is Three-finger toxin MS1 from Micrurus surinamensis (Surinam coral snake).